The following is a 384-amino-acid chain: Transcriptional regulator of the unfolded protein response hacA (384 aa).

Residues 1–18 show a composition bias toward polar residues; it reads MTESTFAVETFSMDSMSP. Disordered stretches follow at residues 1–27 and 41–94; these read MTES…IPRL and LVPE…QRRI. Over residues 84–94 the composition is skewed to basic and acidic residues; the sequence is KTEDEKEQRRI. Residues 90-153 enclose the bZIP domain; that stretch reads EQRRIERVLR…NRLSQQVAKL (64 aa). The tract at residues 92 to 101 is basic motif; it reads RRIERVLRNR. The leucine-zipper stretch occupies residues 106-113; sequence ISRERKRL. 2 disordered regions span residues 208 to 256 and 331 to 384; these read SIPF…PSDL and PDED…AGAQ. Residues 218-240 are compositionally biased toward low complexity; the sequence is STTTTTTTTTTTSNNISSTSSTT.

Belongs to the bZIP family.

It is found in the nucleus. Functionally, master transcriptional regulator of the unfolded protein response (UPR) that recognizes and binds to the UPR element (UPRE) in the promoter of UPR-regulated genes. Exposure to antifungals and ER-stressing agents initiates the activation of hacA which occurs when a 20 nucleotide fragment is removed from part of the exon-2 and part of intron-2, which in turn promotes the arisen of the DNA binding site motif and a dimer interface domain. Modulates the expression of genes related to cell wall synthesis, ergosterol biosynthesis, pigmentation, heat shock proteins, and the genes coding for mannosyltransferase enzymes. Plays a key role in both response to stress and host-pathogen interaction. The polypeptide is Transcriptional regulator of the unfolded protein response hacA (Trichophyton rubrum (strain ATCC MYA-4607 / CBS 118892) (Athlete's foot fungus)).